Here is a 110-residue protein sequence, read N- to C-terminus: Large ribosomal subunit protein uL22 (110 aa).

It belongs to the universal ribosomal protein uL22 family. In terms of assembly, part of the 50S ribosomal subunit.

In terms of biological role, this protein binds specifically to 23S rRNA; its binding is stimulated by other ribosomal proteins, e.g. L4, L17, and L20. It is important during the early stages of 50S assembly. It makes multiple contacts with different domains of the 23S rRNA in the assembled 50S subunit and ribosome. The globular domain of the protein is located near the polypeptide exit tunnel on the outside of the subunit, while an extended beta-hairpin is found that lines the wall of the exit tunnel in the center of the 70S ribosome. The polypeptide is Large ribosomal subunit protein uL22 (Yersinia enterocolitica serotype O:8 / biotype 1B (strain NCTC 13174 / 8081)).